The chain runs to 336 residues: MYDEERIVSGDSFEGEDLNEQSLRPQTFDQYIGQKLLKDEISVYIQAAKQREESLDHVLLYGPPGLGKTTLAIVIANEMGVKIKTTTGPAIEKPGDLVALLNELEPGDVLFIDEIHRLPKNVEEILYSAMEDYFIDIIVGQGPTAHPVHFPLPPFTLVGATTRAGLLSAPLRARFGIVGHMEYYNEVDLSQIIKRSAQILSTGIDDEGAHEIARRSRGTPRVANRLLKRVRDFAEVKHKDKIDTEIVQFALDLLRVDKVGLDRTDRKLLKAMIELYDGGPVGLNTIAANIGEESDTIADMIEPYLMQIGFIKRTPRGRMVTLAAYEHLGIKYNKEG.

The tract at residues 1–184 is large ATPase domain (RuvB-L); it reads MYDEERIVSG…FGIVGHMEYY (184 aa). ATP is bound by residues L23, R24, G65, K68, T69, T70, 131 to 133, R174, Y184, and R221; that span reads EDY. T69 lines the Mg(2+) pocket. The interval 185–255 is small ATPAse domain (RuvB-S); it reads NEVDLSQIIK…IVQFALDLLR (71 aa). Residues 258–336 form a head domain (RuvB-H) region; the sequence is KVGLDRTDRK…HLGIKYNKEG (79 aa). Residues R313 and R318 each coordinate DNA.

This sequence belongs to the RuvB family. Homohexamer. Forms an RuvA(8)-RuvB(12)-Holliday junction (HJ) complex. HJ DNA is sandwiched between 2 RuvA tetramers; dsDNA enters through RuvA and exits via RuvB. An RuvB hexamer assembles on each DNA strand where it exits the tetramer. Each RuvB hexamer is contacted by two RuvA subunits (via domain III) on 2 adjacent RuvB subunits; this complex drives branch migration. In the full resolvosome a probable DNA-RuvA(4)-RuvB(12)-RuvC(2) complex forms which resolves the HJ.

The protein localises to the cytoplasm. The catalysed reaction is ATP + H2O = ADP + phosphate + H(+). Functionally, the RuvA-RuvB-RuvC complex processes Holliday junction (HJ) DNA during genetic recombination and DNA repair, while the RuvA-RuvB complex plays an important role in the rescue of blocked DNA replication forks via replication fork reversal (RFR). RuvA specifically binds to HJ cruciform DNA, conferring on it an open structure. The RuvB hexamer acts as an ATP-dependent pump, pulling dsDNA into and through the RuvAB complex. RuvB forms 2 homohexamers on either side of HJ DNA bound by 1 or 2 RuvA tetramers; 4 subunits per hexamer contact DNA at a time. Coordinated motions by a converter formed by DNA-disengaged RuvB subunits stimulates ATP hydrolysis and nucleotide exchange. Immobilization of the converter enables RuvB to convert the ATP-contained energy into a lever motion, pulling 2 nucleotides of DNA out of the RuvA tetramer per ATP hydrolyzed, thus driving DNA branch migration. The RuvB motors rotate together with the DNA substrate, which together with the progressing nucleotide cycle form the mechanistic basis for DNA recombination by continuous HJ branch migration. Branch migration allows RuvC to scan DNA until it finds its consensus sequence, where it cleaves and resolves cruciform DNA. The chain is Holliday junction branch migration complex subunit RuvB from Ligilactobacillus salivarius (strain UCC118) (Lactobacillus salivarius).